The chain runs to 77 residues: Large ribosomal subunit protein bL28 (77 aa).

The protein belongs to the bacterial ribosomal protein bL28 family.

In Acidovorax ebreus (strain TPSY) (Diaphorobacter sp. (strain TPSY)), this protein is Large ribosomal subunit protein bL28.